The chain runs to 472 residues: Homeobox protein PKNOX2 (472 aa).

The segment at 1 to 62 (MMQHASPAPA…STPVPSAPID (62 aa)) is disordered. Over residues 26 to 38 (DSPQMTATTQPPS) the composition is skewed to polar residues. Low complexity predominate over residues 46 to 56 (SAPSAAASTPV). Residues 96–179 (GSECITSASF…MHSDNLLRND (84 aa)) form the MEIS N-terminal domain. A DNA-binding region (homeobox) is located at residues 291 to 350 (KRGVLPKHATNIMRSWLFQHLMHPYPTEDEKRQIAAQTNLTLLQVNNWFVNARRRILQPM). Disordered stretches follow at residues 351 to 371 (LDAS…QHRP), 386 to 405 (QQQG…LDNL), and 423 to 472 (AAHD…DSLV). Residues 361–371 (KAKKIKSQHRP) show a composition bias toward basic residues. Positions 396-405 (PDGSINLDNL) are enriched in polar residues. The segment covering 429–454 (LDGTEEEDEDEMEEEEEEELEEEVDE) has biased composition (acidic residues).

Belongs to the TALE/MEIS homeobox family.

Its subcellular location is the nucleus. This is Homeobox protein PKNOX2 (PKNOX2) from Pongo abelii (Sumatran orangutan).